A 155-amino-acid polypeptide reads, in one-letter code: Riboflavin kinase (155 aa).

The ATP site is built by Gly-15, Lys-21, Thr-27, and Asn-29. 2 residues coordinate Mg(2+): Thr-27 and Asn-29. Catalysis depends on Glu-79, which acts as the Nucleophile. 3 residues coordinate ATP: Ile-82, His-84, and Tyr-91. Residues Arg-104, Lys-107, and Phe-109 each contribute to the FMN site.

In terms of assembly, monomer. Directly interacts with TNFRSF1A death domain. TNFRSF1A-binding may be supported by TRADD. In the absence of TNFRSF1A, interacts with TRADD. Independently of TNFRSF1A, interacts with the NADPH oxidase subunit CYBA. It depends on Zn(2+) as a cofactor. The cofactor is Mg(2+). In terms of tissue distribution, detected in brain, placenta and urinary bladder.

The protein resides in the cytoplasm. It carries out the reaction riboflavin + ATP = FMN + ADP + H(+). It participates in cofactor biosynthesis; FMN biosynthesis; FMN from riboflavin (ATP route): step 1/1. In terms of biological role, catalyzes the phosphorylation of riboflavin (vitamin B2) to form flavin-mononucleotide (FMN), hence rate-limiting enzyme in the synthesis of FAD. Essential for TNF-induced reactive oxygen species (ROS) production. Through its interaction with both TNFRSF1A and CYBA, physically and functionally couples TNFRSF1A to NADPH oxidase. TNF-activation of RFK may enhance the incorporation of FAD in NADPH oxidase, a critical step for the assembly and activation of NADPH oxidase. The protein is Riboflavin kinase (RFK) of Homo sapiens (Human).